The sequence spans 311 residues: p-hydroxybenzoic acid efflux pump subunit AaeA (311 aa).

The chain crosses the membrane as a helical span at residues 11-31; the sequence is VGITVLVVVLAVIAIFNVWAF.

The protein belongs to the membrane fusion protein (MFP) (TC 8.A.1) family.

The protein resides in the cell inner membrane. Its function is as follows. Forms an efflux pump with AaeB. This Yersinia pestis bv. Antiqua (strain Antiqua) protein is p-hydroxybenzoic acid efflux pump subunit AaeA.